The following is a 35-amino-acid chain: Purotoxin-1 (35 aa).

Intrachain disulfides connect Cys-3–Cys-16, Cys-10–Cys-21, Cys-15–Cys-32, and Cys-23–Cys-30.

The protein belongs to the neurotoxin 33 family. Expressed by the venom gland.

It is found in the secreted. Its function is as follows. Inhibits P2RX3 receptors. Has an analgesic effect in rat. Enhances the high-affinity desensitization of P2RX3 purinoceptors. At 50 nM, decreases the IC(50) for ambient ATP from 46.5 nM to 12.7 nM in mouse P2RX3. The polypeptide is Purotoxin-1 (Alopecosa marikovskyi (Wolf spider)).